The following is a 59-amino-acid chain: TLQGQKDVIELLKEEGLRDKIKVMVGGAPATQAWADKIGADCYAENASEAVAKAKELLA.

In terms of domain architecture, B12-binding spans 1-59 (TLQGQKDVIELLKEEGLRDKIKVMVGGAPATQAWADKIGADCYAENASEAVAKAKELLA).

Belongs to the methylamine corrinoid protein family.

It participates in one-carbon metabolism; methanogenesis from dimethylamine. Its function is as follows. Acts as a methyl group carrier between MtbB and MtbA. The polypeptide is Dimethylamine corrinoid protein (mtbC) (Methanosarcina thermophila).